We begin with the raw amino-acid sequence, 154 residues long: 6,7-dimethyl-8-ribityllumazine synthase (154 aa).

5-amino-6-(D-ribitylamino)uracil contacts are provided by residues F23, 57–59 (AYE), and 81–83 (AVI). A (2S)-2-hydroxy-3-oxobutyl phosphate-binding site is contributed by 86-87 (GT). Residue H89 is the Proton donor of the active site. F114 contacts 5-amino-6-(D-ribitylamino)uracil. R128 contributes to the (2S)-2-hydroxy-3-oxobutyl phosphate binding site.

This sequence belongs to the DMRL synthase family. As to quaternary structure, forms an icosahedral capsid composed of 60 subunits, arranged as a dodecamer of pentamers.

It carries out the reaction (2S)-2-hydroxy-3-oxobutyl phosphate + 5-amino-6-(D-ribitylamino)uracil = 6,7-dimethyl-8-(1-D-ribityl)lumazine + phosphate + 2 H2O + H(+). It participates in cofactor biosynthesis; riboflavin biosynthesis; riboflavin from 2-hydroxy-3-oxobutyl phosphate and 5-amino-6-(D-ribitylamino)uracil: step 1/2. Its function is as follows. Catalyzes the formation of 6,7-dimethyl-8-ribityllumazine by condensation of 5-amino-6-(D-ribitylamino)uracil with 3,4-dihydroxy-2-butanone 4-phosphate. This is the penultimate step in the biosynthesis of riboflavin. The chain is 6,7-dimethyl-8-ribityllumazine synthase from Acidithiobacillus ferrooxidans (strain ATCC 23270 / DSM 14882 / CIP 104768 / NCIMB 8455) (Ferrobacillus ferrooxidans (strain ATCC 23270)).